Here is a 185-residue protein sequence, read N- to C-terminus: Elongation factor P (185 aa).

It belongs to the elongation factor P family.

Its subcellular location is the cytoplasm. Its pathway is protein biosynthesis; polypeptide chain elongation. Functionally, involved in peptide bond synthesis. Stimulates efficient translation and peptide-bond synthesis on native or reconstituted 70S ribosomes in vitro. Probably functions indirectly by altering the affinity of the ribosome for aminoacyl-tRNA, thus increasing their reactivity as acceptors for peptidyl transferase. This is Elongation factor P from Staphylococcus carnosus (strain TM300).